Reading from the N-terminus, the 297-residue chain is Protein PecM (297 aa).

10 helical membrane passes run phenylalanine 6–proline 26, alanine 38–tryptophan 58, leucine 60–tyrosine 80, valine 86–leucine 106, valine 116–leucine 136, proline 138–threonine 158, methionine 167–valine 187, leucine 203–serine 223, valine 231–phenylalanine 251, and leucine 261–serine 281. EamA domains follow at residues cysteine 12–serine 130 and methionine 149–aspartate 276.

This sequence belongs to the EamA transporter family.

It localises to the cell membrane. Its function is as follows. Involved in pectinase, cellulase, and blue pigment regulation. This chain is Protein PecM (pecM), found in Dickeya dadantii (strain 3937) (Erwinia chrysanthemi (strain 3937)).